The following is a 299-amino-acid chain: Biotin transporter (299 aa).

10 consecutive transmembrane segments (helical) span residues 2-22 (ALLI…GEYL), 26-46 (VDSY…FLPF), 56-76 (TVGL…MLSF), 81-101 (YLTV…ITLI), 110-130 (LRWG…IIRY), 137-157 (FWTG…GMVG), 172-192 (AFAW…FLLG), 202-222 (LQWG…YFMW), 233-253 (TLGI…LAIW), and 256-276 (QPHW…LWVH). 2 consecutive EamA domains span residues 3-128 (LLII…AGII) and 139-274 (TGLL…ASLW).

The protein belongs to the drug/metabolite transporter (DMT) superfamily. 10 TMS drug/metabolite exporter (DME) (TC 2.A.7.3) family.

It is found in the cell inner membrane. The enzyme catalyses biotin(in) = biotin(out). Its function is as follows. Uptake of biotin. The sequence is that of Biotin transporter from Escherichia coli O157:H7.